Consider the following 95-residue polypeptide: UPF0235 protein Swoo_1329 (95 aa).

It belongs to the UPF0235 family.

The polypeptide is UPF0235 protein Swoo_1329 (Shewanella woodyi (strain ATCC 51908 / MS32)).